A 219-amino-acid chain; its full sequence is Cytidylate kinase (219 aa).

15–23 (GPAASGKGT) provides a ligand contact to ATP.

The protein belongs to the cytidylate kinase family. Type 1 subfamily.

It is found in the cytoplasm. It carries out the reaction CMP + ATP = CDP + ADP. The enzyme catalyses dCMP + ATP = dCDP + ADP. The sequence is that of Cytidylate kinase from Brucella melitensis biotype 2 (strain ATCC 23457).